The chain runs to 778 residues: Probable glutamine--tRNA ligase (778 aa).

A compositionally biased stretch (basic and acidic residues) spans 188–205 (LKPQTKANDKPKAAKPKA). Residues 188-219 (LKPQTKANDKPKAAKPKAEVTPAAQTAEAASD) are disordered. A 'HIGH' region motif is present at residues 273 to 283 (PEPNGILHIGH). Residues 274–276 (EPN) and 280–286 (HIGHAKA) each bind ATP. Residues D306 and Y441 each contribute to the L-glutamine site. Residues T460, 489 to 490 (RL), and 497 to 499 (VSK) contribute to the ATP site. Positions 496–500 (LVSKR) match the 'KMSKS' region motif.

The protein belongs to the class-I aminoacyl-tRNA synthetase family.

It catalyses the reaction tRNA(Gln) + L-glutamine + ATP = L-glutaminyl-tRNA(Gln) + AMP + diphosphate. This Drosophila melanogaster (Fruit fly) protein is Probable glutamine--tRNA ligase.